A 547-amino-acid chain; its full sequence is Glucose-6-phosphate isomerase (547 aa).

The active-site Proton donor is glutamate 356. Active-site residues include histidine 387 and lysine 508.

Belongs to the GPI family.

It is found in the cytoplasm. It carries out the reaction alpha-D-glucose 6-phosphate = beta-D-fructose 6-phosphate. Its pathway is carbohydrate biosynthesis; gluconeogenesis. It functions in the pathway carbohydrate degradation; glycolysis; D-glyceraldehyde 3-phosphate and glycerone phosphate from D-glucose: step 2/4. Catalyzes the reversible isomerization of glucose-6-phosphate to fructose-6-phosphate. This Cupriavidus taiwanensis (strain DSM 17343 / BCRC 17206 / CCUG 44338 / CIP 107171 / LMG 19424 / R1) (Ralstonia taiwanensis (strain LMG 19424)) protein is Glucose-6-phosphate isomerase.